The chain runs to 558 residues: Arginine--tRNA ligase (558 aa).

The 'HIGH' region motif lies at 119 to 129; it reads ANPDGPLHVGH.

Belongs to the class-I aminoacyl-tRNA synthetase family.

Its subcellular location is the cytoplasm. It carries out the reaction tRNA(Arg) + L-arginine + ATP = L-arginyl-tRNA(Arg) + AMP + diphosphate. The polypeptide is Arginine--tRNA ligase (Methanothrix thermoacetophila (strain DSM 6194 / JCM 14653 / NBRC 101360 / PT) (Methanosaeta thermophila)).